A 126-amino-acid polypeptide reads, in one-letter code: Large ribosomal subunit protein bL12 (126 aa).

This sequence belongs to the bacterial ribosomal protein bL12 family. In terms of assembly, homodimer. Part of the ribosomal stalk of the 50S ribosomal subunit. Forms a multimeric L10(L12)X complex, where L10 forms an elongated spine to which 2 to 4 L12 dimers bind in a sequential fashion. Binds GTP-bound translation factors.

Its function is as follows. Forms part of the ribosomal stalk which helps the ribosome interact with GTP-bound translation factors. Is thus essential for accurate translation. The protein is Large ribosomal subunit protein bL12 of Methylorubrum populi (strain ATCC BAA-705 / NCIMB 13946 / BJ001) (Methylobacterium populi).